The chain runs to 537 residues: Immunoglobulin-like domain-containing receptor 1 (537 aa).

A signal peptide spans 1–22 (MGCGLLAAGLLLFTWLPAGCLS). In terms of domain architecture, Ig-like V-type spans 23–161 (LLVTVQHTER…TSGDPDKEVK (139 aa)). Residues 23-166 (LLVTVQHTER…DKEVKLIVLH (144 aa)) lie on the Extracellular side of the membrane. Cysteine 44 and cysteine 144 form a disulfide bridge. A helical transmembrane segment spans residues 167-187 (WLTVIFIILGALLLLLLIGVC). Over 188 to 537 (WCQCCPQYCC…SSHSGRSVVI (350 aa)) the chain is Cytoplasmic. The tract at residues 333–537 (PPLIRDPPSS…SSHSGRSVVI (205 aa)) is disordered. A compositionally biased stretch (polar residues) spans 341 to 357 (SSRTSNPSHQQRLNAVS). Basic and acidic residues-rich tracts occupy residues 359–380 (RHCD…RELQ) and 434–444 (RRPEPREGAQR). The segment covering 480–490 (QRRHHHRRRRS) has biased composition (basic residues). Phosphoserine occurs at positions 490 and 492. The segment covering 518 to 530 (GNVERRLERESSH) has biased composition (basic and acidic residues).

It belongs to the immunoglobulin superfamily. LISCH7 family. As to quaternary structure, homooligomer. Interacts with MARVELD2 and OCLN; the interaction is required to recruit MARVELD2 to tricellular contacts. Interacts (via C-terminus) with TRA2A, TRA2B and SRSF1. Interacts with PLSCR1. As to expression, expressed in the vestibule and in hair cells and supporting cells of the cochlea. Expressed in epithelial tissues. Highly expressed in colon but also detected in small intestine, bladder and lung. In colon, expressed in the upper portion of the crypts (at protein level). Expressed in CCK secretory cells of the proximal small intestine (at protein level). Expressed in the organ of Corti, stria vascularis, utricle and saccule of the inner ear.

It is found in the cell membrane. The protein resides in the cell junction. Its subcellular location is the tight junction. It localises to the nucleus. The protein localises to the cytoplasm. Functionally, maintains epithelial barrier function by recruiting MARVELD2/tricellulin to tricellular tight junctions (tTJs). Crucial for normal hearing by maintaining the structural and functional integrity of tTJs, which are critical for the survival of auditory neurosensory HCs. Mediates fatty acids and lipoproteins-stimulated CCK/cholecystokinin secretion in the small intestine. In the inner ear, may regulate alternative pre-mRNA splicing via binding to TRA2A, TRA2B and SRSF1. This is Immunoglobulin-like domain-containing receptor 1 from Mus musculus (Mouse).